Here is a 121-residue protein sequence, read N- to C-terminus: MIKPQTYLKIADNTGAQKIMCIRILGPNCQYANIGDIIIAVVKEAIPNMVVKKSDIVKAVIVRTVKGVRRESGMAIRFDENAAVIINNDRSPKGTRIFGPIARELREKEFVKIMSLAPEVV.

It belongs to the universal ribosomal protein uL14 family. Part of the 50S ribosomal subunit.

The protein localises to the plastid. It is found in the chloroplast. In terms of biological role, binds to 23S rRNA. This chain is Large ribosomal subunit protein uL14c, found in Euglena gracilis.